Here is a 126-residue protein sequence, read N- to C-terminus: Phosphoribosyl-AMP cyclohydrolase (126 aa).

Aspartate 73 lines the Mg(2+) pocket. Cysteine 74 contributes to the Zn(2+) binding site. Mg(2+) is bound by residues aspartate 75 and aspartate 77. The Zn(2+) site is built by cysteine 91 and cysteine 98.

Belongs to the PRA-CH family. In terms of assembly, homodimer. Requires Mg(2+) as cofactor. Zn(2+) is required as a cofactor.

The protein localises to the cytoplasm. It carries out the reaction 1-(5-phospho-beta-D-ribosyl)-5'-AMP + H2O = 1-(5-phospho-beta-D-ribosyl)-5-[(5-phospho-beta-D-ribosylamino)methylideneamino]imidazole-4-carboxamide. The protein operates within amino-acid biosynthesis; L-histidine biosynthesis; L-histidine from 5-phospho-alpha-D-ribose 1-diphosphate: step 3/9. Catalyzes the hydrolysis of the adenine ring of phosphoribosyl-AMP. The polypeptide is Phosphoribosyl-AMP cyclohydrolase (Solibacter usitatus (strain Ellin6076)).